A 565-amino-acid chain; its full sequence is Laccase-12 (565 aa).

Residues 1-24 (MTTVHTFSILLFFCSLFSASLIIA) form the signal peptide. 2 Plastocyanin-like domains span residues 32–148 (VIQE…PTPG) and 158–310 (RQTA…YKKT). Asparagine 78 carries N-linked (GlcNAc...) asparagine glycosylation. Histidine 82, histidine 84, histidine 127, and histidine 129 together coordinate Cu cation. N-linked (GlcNAc...) asparagine glycosylation is found at asparagine 187, asparagine 203, asparagine 298, asparagine 325, asparagine 377, asparagine 387, asparagine 395, and asparagine 428. The region spanning 413 to 549 (DFPSKPPVKF…AMAFLVDNGV (137 aa)) is the Plastocyanin-like 3 domain. The Cu cation site is built by histidine 466, histidine 469, histidine 471, histidine 528, cysteine 529, histidine 530, and histidine 534.

This sequence belongs to the multicopper oxidase family. It depends on Cu cation as a cofactor. As to expression, predominantly expressed in the inflorescence stem.

Its subcellular location is the secreted. The protein resides in the extracellular space. The protein localises to the apoplast. It catalyses the reaction 4 hydroquinone + O2 = 4 benzosemiquinone + 2 H2O. In terms of biological role, lignin degradation and detoxification of lignin-derived products. The protein is Laccase-12 (LAC12) of Arabidopsis thaliana (Mouse-ear cress).